The primary structure comprises 26 residues: Conotoxin Eb6.15 (26 aa).

Disulfide bonds link C7–C18 and C13–C25.

It belongs to the conotoxin O1 superfamily. As to expression, expressed by the venom duct.

It is found in the secreted. The chain is Conotoxin Eb6.15 (E1) from Conus ebraeus (Hebrew cone).